The chain runs to 424 residues: Nuclear hormone receptor family member nhr-55 (424 aa).

Residues 1–19 (MNSPSSSSSFCSSSSSPSS) show a composition bias toward low complexity. Residues 1 to 20 (MNSPSSSSSFCSSSSSPSSL) form a disordered region. A DNA-binding region (nuclear receptor) is located at residues 25–100 (PDTCQVCGQK…VGMTIENFQF (76 aa)). 2 consecutive NR C4-type zinc fingers follow at residues 28–55 (CQVC…FRRC) and 64–88 (CRRN…LKKC). The region spanning 169–424 (EVPLHTPNAL…FSHPEVFIDL (256 aa)) is the NR LBD domain.

It belongs to the nuclear hormone receptor family.

The protein localises to the nucleus. Its function is as follows. Orphan nuclear receptor. This chain is Nuclear hormone receptor family member nhr-55 (nhr-55), found in Caenorhabditis elegans.